The sequence spans 773 residues: Endonuclease MutS2 (773 aa).

ATP is bound at residue 334–341 (GANAGGKT). Positions 698-773 (VDLRGMRADV…GDGMTMVTLK (76 aa)) constitute a Smr domain.

Belongs to the DNA mismatch repair MutS family. MutS2 subfamily. Homodimer. Binds to stalled ribosomes, contacting rRNA.

In terms of biological role, endonuclease that is involved in the suppression of homologous recombination and thus may have a key role in the control of bacterial genetic diversity. Acts as a ribosome collision sensor, splitting the ribosome into its 2 subunits. Detects stalled/collided 70S ribosomes which it binds and splits by an ATP-hydrolysis driven conformational change. Acts upstream of the ribosome quality control system (RQC), a ribosome-associated complex that mediates the extraction of incompletely synthesized nascent chains from stalled ribosomes and their subsequent degradation. Probably generates substrates for RQC. The sequence is that of Endonuclease MutS2 from Solidesulfovibrio magneticus (strain ATCC 700980 / DSM 13731 / RS-1) (Desulfovibrio magneticus).